Reading from the N-terminus, the 992-residue chain is MGMRSAARMPKLTRRSRILIMIALGVIVLLLAGPRLIDAYVDWLWFGELGYRSVFTTMLATRIVVCLVAGVVVGGIVFGGLALAYRTRPVFVPDADNDPVARYRAVVLARLRLVGIGIPAAIGLLAGIVAQSYWARIQLFLHGGDFGVRDPQFGRDLGFYAFELPFYRLMLSYMLVSVFLAFVANLVAHYIFGGIRLSGRTGALSRSARVQLVSLVGVLVLLKAVAYWLDRYELLSHTRGGKPFTGAGYTDINAVLPAKLILMAIALICAAAVFSAIALRDLRIPAIGLVLLLLSSLIVGAGWPLIVEQISVKPNAAQKESEYISRSITATRQAYGLTSDVVTYRNYSGDSPATAQQVAADRATTSNIRLLDPTIVSPAFTQFQQGKNFYYFPDQLSIDRYLDRNGNLRDYVVAARELNPDRLIDNQRDWINRHTVYTHGNGFIASPANTVRGIANDPNQNGGYPEFLVNVVGANGTVVSDGPAPLDQPRIYFGPVISNTSADYAIVGRNGDDREYDYETNIDTKRYTYTGSGGVPLGGWLARSVFAAKFAERNFLFSNVIGSNSKILFNRDPAQRVEAVAPWLTTDSAVYPAIVNKRLVWIVDGYTTLDNYPYSELTSLSSATADSNEVAFNRLVPDKKVSYIRNSVKATVDAYDGTVTLYQQDEKDPVLKAWMQVFPGTVKPKSDIAPELAEHLRYPEDLFKVQRMLLAKYHVNDPVTFFSTSDFWDVPLDPNPTASSYQPPYYIVAKNIAKDDNSASYQLISAMNRFKRDYLAAYISASSDPATYGNLTVLTIPGQVNGPKLANNAITTDPAVSQDLGVIGRDNQNRIRWGNLLTLPVARGGLLYVEPVYASPGASDAASSYPRLIRVAMMYNDKVGYGPTVRDALTGLFGPGAGATATGIAPTEAAVPPSPAANPPPPASGPQPPPVTAAPPVPVGAVTLSPAKVAALQEIQAAIGAARDAQKKGDFAAYGSALQRLDEAITKFNDAG.

The next 7 membrane-spanning stretches (helical) occupy residues 17–39 (RILI…LIDA), 59–81 (LATR…FGGL), 113–135 (LVGI…SYWA), 169–191 (LMLS…AHYI), 212–229 (LVSL…AYWL), 255–277 (VLPA…FSAI), and 284–306 (IPAI…WPLI). The disordered stretch occupies residues 906–938 (PTEAAVPPSPAANPPPPASGPQPPPVTAAPPVP). A compositionally biased stretch (pro residues) spans 912-938 (PPSPAANPPPPASGPQPPPVTAAPPVP).

It belongs to the UPF0182 family.

The protein localises to the cell membrane. In Mycobacterium tuberculosis (strain CDC 1551 / Oshkosh), this protein is UPF0182 protein MT3285.